The chain runs to 714 residues: Phosphate acetyltransferase (714 aa).

The interval 390-714 is phosphate acetyltransferase; that stretch reads AFRYQLTELA…TAIQASQQQQ (325 aa).

This sequence in the N-terminal section; belongs to the CobB/CobQ family. It in the C-terminal section; belongs to the phosphate acetyltransferase and butyryltransferase family. In terms of assembly, homohexamer.

It localises to the cytoplasm. The enzyme catalyses acetyl-CoA + phosphate = acetyl phosphate + CoA. It catalyses the reaction propanoyl-CoA + phosphate = propanoyl phosphate + CoA. It functions in the pathway metabolic intermediate biosynthesis; acetyl-CoA biosynthesis; acetyl-CoA from acetate: step 2/2. Allosterically inhibited by NADH. Involved in acetate metabolism. Catalyzes the reversible interconversion of acetyl-CoA and acetyl phosphate. The direction of the overall reaction changes depending on growth conditions. Required for acetate recapture but not for acetate excretion when this organism is grown on ethanolamine (EA); is unable to complement an eutD deletion during growth on EA. Works with proprionate kinase PduW to capture exogenous propionate and regenerate propionyl-CoA during degradation of propionate and 1,2-propanediol (1,2-PD). The polypeptide is Phosphate acetyltransferase (pta) (Salmonella typhimurium (strain LT2 / SGSC1412 / ATCC 700720)).